The chain runs to 350 residues: Gene 40 protein (350 aa).

237-244 (AVKESGKT) is a binding site for ATP.

The sequence is that of Gene 40 protein (40) from Bacillus phage SP01 (Bacteriophage SP01).